Reading from the N-terminus, the 277-residue chain is MLHHYYSGGAGHHQDVAAAGSPGDMASSTFSLFFPMSNGQCWPPSTVEESAAYDDHSTVTTSPSSPSSSSTGSVDCTLSLGTPSSRRAEPVAAAAPAANHGAPVPAHYPSLSAATVSWDATAESYYCGQQGRPATGAAKCAAGAGHDALLDRRCANCGTASTPLWRNGPRGPKSLCNACGIRYKKEERRAAATTTTADGAAGCGFITAQRGRGSTAAKAAPAVTTCGEETSPYVVGGGGGEVANAAYLAWRLNVVPPAATATAFSVWPERASLYHYN.

The segment at 52–94 (AYDDHSTVTTSPSSPSSSSTGSVDCTLSLGTPSSRRAEPVAAA) is disordered. The segment covering 58–74 (TVTTSPSSPSSSSTGSV) has biased composition (low complexity). Residues 154 to 179 (CANCGTASTPLWRNGPRGPKSLCNAC) form a GATA-type zinc finger.

This sequence belongs to the type IV zinc-finger family. Class B subfamily.

Functionally, probable transcription factor that regulates organogenesis during transition from the vegetative to the reproductive phase. Regulates the expression of CYP78A11/PLA1, HD3A and MADS1 during reproductive development in rice. May act upstream of CYP78A11/PLA1 during panicle development. Acts independently of the photoperiodic and gibberellin signaling pathways. In Oryza sativa subsp. indica (Rice), this protein is GATA transcription factor 15.